The primary structure comprises 575 residues: Proline--tRNA ligase (575 aa).

This sequence belongs to the class-II aminoacyl-tRNA synthetase family. ProS type 1 subfamily. Homodimer.

Its subcellular location is the cytoplasm. It catalyses the reaction tRNA(Pro) + L-proline + ATP = L-prolyl-tRNA(Pro) + AMP + diphosphate. Functionally, catalyzes the attachment of proline to tRNA(Pro) in a two-step reaction: proline is first activated by ATP to form Pro-AMP and then transferred to the acceptor end of tRNA(Pro). As ProRS can inadvertently accommodate and process non-cognate amino acids such as alanine and cysteine, to avoid such errors it has two additional distinct editing activities against alanine. One activity is designated as 'pretransfer' editing and involves the tRNA(Pro)-independent hydrolysis of activated Ala-AMP. The other activity is designated 'posttransfer' editing and involves deacylation of mischarged Ala-tRNA(Pro). The misacylated Cys-tRNA(Pro) is not edited by ProRS. The chain is Proline--tRNA ligase from Desulfitobacterium hafniense (strain DSM 10664 / DCB-2).